An 88-amino-acid chain; its full sequence is Small ribosomal subunit protein uS17 (88 aa).

Belongs to the universal ribosomal protein uS17 family. Part of the 30S ribosomal subunit.

Functionally, one of the primary rRNA binding proteins, it binds specifically to the 5'-end of 16S ribosomal RNA. The chain is Small ribosomal subunit protein uS17 from Nitratidesulfovibrio vulgaris (strain DSM 19637 / Miyazaki F) (Desulfovibrio vulgaris).